The following is a 429-amino-acid chain: Enolase (429 aa).

Q163 is a (2R)-2-phosphoglycerate binding site. E205 functions as the Proton donor in the catalytic mechanism. The Mg(2+) site is built by D242, E285, and D312. (2R)-2-phosphoglycerate is bound by residues K337, R366, S367, and K388. K337 functions as the Proton acceptor in the catalytic mechanism.

This sequence belongs to the enolase family. Mg(2+) serves as cofactor.

The protein resides in the cytoplasm. It is found in the secreted. The protein localises to the cell surface. It carries out the reaction (2R)-2-phosphoglycerate = phosphoenolpyruvate + H2O. It functions in the pathway carbohydrate degradation; glycolysis; pyruvate from D-glyceraldehyde 3-phosphate: step 4/5. Its function is as follows. Catalyzes the reversible conversion of 2-phosphoglycerate (2-PG) into phosphoenolpyruvate (PEP). It is essential for the degradation of carbohydrates via glycolysis. This chain is Enolase, found in Oceanobacillus iheyensis (strain DSM 14371 / CIP 107618 / JCM 11309 / KCTC 3954 / HTE831).